A 273-amino-acid chain; its full sequence is 3-methyl-2-oxobutanoate hydroxymethyltransferase (273 aa).

2 residues coordinate Mg(2+): aspartate 53 and aspartate 92. 3-methyl-2-oxobutanoate contacts are provided by residues 53 to 54, aspartate 92, and lysine 122; that span reads DS. Glutamate 124 is a binding site for Mg(2+). Glutamate 191 serves as the catalytic Proton acceptor.

Belongs to the PanB family. As to quaternary structure, homodecamer; pentamer of dimers. Mg(2+) serves as cofactor.

The protein localises to the cytoplasm. It carries out the reaction 3-methyl-2-oxobutanoate + (6R)-5,10-methylene-5,6,7,8-tetrahydrofolate + H2O = 2-dehydropantoate + (6S)-5,6,7,8-tetrahydrofolate. The protein operates within cofactor biosynthesis; (R)-pantothenate biosynthesis; (R)-pantoate from 3-methyl-2-oxobutanoate: step 1/2. In terms of biological role, catalyzes the reversible reaction in which hydroxymethyl group from 5,10-methylenetetrahydrofolate is transferred onto alpha-ketoisovalerate to form ketopantoate. This Phocaeicola vulgatus (strain ATCC 8482 / DSM 1447 / JCM 5826 / CCUG 4940 / NBRC 14291 / NCTC 11154) (Bacteroides vulgatus) protein is 3-methyl-2-oxobutanoate hydroxymethyltransferase.